Consider the following 454-residue polypeptide: Bifunctional protein GlmU (454 aa).

Residues 1–228 (MTLPLHVVIL…PQDVEGANDP (228 aa)) form a pyrophosphorylase region. Residues 10–13 (LAAG), lysine 24, glutamine 76, 81–82 (GT), 103–105 (YGD), glycine 138, glutamate 153, asparagine 168, and asparagine 226 contribute to the UDP-N-acetyl-alpha-D-glucosamine site. Aspartate 105 provides a ligand contact to Mg(2+). Asparagine 226 serves as a coordination point for Mg(2+). Residues 229-249 (WQLAQLERAWQLRAARALCLQ) are linker. Positions 250–454 (GVRMADPARV…IEGWERPKKK (205 aa)) are N-acetyltransferase. Residues arginine 332 and lysine 350 each contribute to the UDP-N-acetyl-alpha-D-glucosamine site. Histidine 362 acts as the Proton acceptor in catalysis. Residues tyrosine 365 and asparagine 376 each contribute to the UDP-N-acetyl-alpha-D-glucosamine site. Acetyl-CoA contacts are provided by residues alanine 379, 385–386 (NY), serine 404, alanine 422, and arginine 439.

The protein in the N-terminal section; belongs to the N-acetylglucosamine-1-phosphate uridyltransferase family. This sequence in the C-terminal section; belongs to the transferase hexapeptide repeat family. As to quaternary structure, homotrimer. Requires Mg(2+) as cofactor.

The protein localises to the cytoplasm. It catalyses the reaction alpha-D-glucosamine 1-phosphate + acetyl-CoA = N-acetyl-alpha-D-glucosamine 1-phosphate + CoA + H(+). It carries out the reaction N-acetyl-alpha-D-glucosamine 1-phosphate + UTP + H(+) = UDP-N-acetyl-alpha-D-glucosamine + diphosphate. It participates in nucleotide-sugar biosynthesis; UDP-N-acetyl-alpha-D-glucosamine biosynthesis; N-acetyl-alpha-D-glucosamine 1-phosphate from alpha-D-glucosamine 6-phosphate (route II): step 2/2. It functions in the pathway nucleotide-sugar biosynthesis; UDP-N-acetyl-alpha-D-glucosamine biosynthesis; UDP-N-acetyl-alpha-D-glucosamine from N-acetyl-alpha-D-glucosamine 1-phosphate: step 1/1. The protein operates within bacterial outer membrane biogenesis; LPS lipid A biosynthesis. In terms of biological role, catalyzes the last two sequential reactions in the de novo biosynthetic pathway for UDP-N-acetylglucosamine (UDP-GlcNAc). The C-terminal domain catalyzes the transfer of acetyl group from acetyl coenzyme A to glucosamine-1-phosphate (GlcN-1-P) to produce N-acetylglucosamine-1-phosphate (GlcNAc-1-P), which is converted into UDP-GlcNAc by the transfer of uridine 5-monophosphate (from uridine 5-triphosphate), a reaction catalyzed by the N-terminal domain. In Xanthomonas campestris pv. campestris (strain 8004), this protein is Bifunctional protein GlmU.